The primary structure comprises 350 residues: tRNA uridine(34) hydroxylase (350 aa).

Residues 146–240 (DDPDALFIDM…YARKAREQGL (95 aa)) enclose the Rhodanese domain. Cysteine 200 functions as the Cysteine persulfide intermediate in the catalytic mechanism.

Belongs to the TrhO family.

It catalyses the reaction uridine(34) in tRNA + AH2 + O2 = 5-hydroxyuridine(34) in tRNA + A + H2O. Catalyzes oxygen-dependent 5-hydroxyuridine (ho5U) modification at position 34 in tRNAs, the first step in 5-carboxymethoxyuridine (cmo5U) biosynthesis. May be part of an alternate pathway, which is able to bypass cmo5U biogenesis in a subset of tRNAs under aerobic conditions. In Escherichia coli O17:K52:H18 (strain UMN026 / ExPEC), this protein is tRNA uridine(34) hydroxylase.